Here is a 372-residue protein sequence, read N- to C-terminus: Tribbles homolog 1 (372 aa).

Disordered stretches follow at residues 1–26 (MRVGPVRFALSGASQPRGPGLLFPAA) and 49–85 (RLSECSSPPDYLSPPGSPCSPQPPPSTQGTGGSCVSS). Residues 59–74 (YLSPPGSPCSPQPPPS) are compositionally biased toward pro residues. The 248-residue stretch at 91-338 (IADYLLLPLA…APQILLHPWF (248 aa)) folds into the Protein kinase domain. The short motif at 355-360 (DQIVPE) is the COP1-binding element.

This sequence belongs to the protein kinase superfamily. CAMK Ser/Thr protein kinase family. Tribbles subfamily. In terms of assembly, monomer. Interacts (via protein kinase domain) with CEBPA. Interacts with COP1.

Adapter protein involved in protein degradation by interacting with COP1 ubiquitin ligase. Promotes CEBPA degradation and inhibits its function. Controls macrophage, eosinophil and neutrophil differentiation via the COP1-binding domain. Regulates myeloid cell differentiation by altering the expression of CEBPA in a COP1-dependent manner. Interacts with MAPK kinases and regulates activation of MAP kinases, but has no kinase activity. The sequence is that of Tribbles homolog 1 from Mus musculus (Mouse).